The primary structure comprises 311 residues: Olfactory receptor 10J4 (311 aa).

Residues 1–29 (MPRPNFMAVTEFTFEGFSIFEWHHRLILF) lie on the Extracellular side of the membrane. The chain crosses the membrane as a helical span at residues 30-50 (VIFLVLYVLTLASNAIILIVI). Residues 51–57 (RLNHQLH) lie on the Cytoplasmic side of the membrane. Residues 58–78 (TPMYFFLSVLSISETYYTVAI) form a helical membrane-spanning segment. The Extracellular segment spans residues 79 to 98 (NPQMLSGLLSPQQTISIPGC). Cysteine 98 and cysteine 180 are disulfide-bonded. Residues 99-119 (AAQLFFYLTFGVNKCFLLTAM) form a helical membrane-spanning segment. Residues 120-149 (GYDHYVAICNPLQYSVIMGKKACIQLVSGS) are Cytoplasmic-facing. Residues 150 to 170 (WNIGLSTAIIQVSSVFSLPFC) form a helical membrane-spanning segment. The Extracellular segment spans residues 171–202 (DANLISHFFCDIRPIMKLACADTTIKEFITLL). The chain crosses the membrane as a helical span at residues 203–223 (ISLCVLVLPMVLIFISYVLIV). Over 224-237 (TTILKIASAEGRRK) the chain is Cytoplasmic. The helical transmembrane segment at 238-254 (AFATCASHLTVVIVHYG) threads the bilayer. At 255 to 272 (RTSFIYLKPKSQNSLQDR) the chain is on the extracellular side. The chain crosses the membrane as a helical span at residues 273 to 292 (LISVTYTVITPLLNPVVYSL). The Cytoplasmic segment spans residues 293–311 (RNKEVKDALLRALGRKPLS).

The protein belongs to the G-protein coupled receptor 1 family.

Its subcellular location is the cell membrane. Odorant receptor. This is Olfactory receptor 10J4 (OR10J4) from Homo sapiens (Human).